The chain runs to 170 residues: Large ribosomal subunit protein uL10 (170 aa).

It belongs to the universal ribosomal protein uL10 family. In terms of assembly, part of the ribosomal stalk of the 50S ribosomal subunit. The N-terminus interacts with L11 and the large rRNA to form the base of the stalk. The C-terminus forms an elongated spine to which L12 dimers bind in a sequential fashion forming a multimeric L10(L12)X complex.

Forms part of the ribosomal stalk, playing a central role in the interaction of the ribosome with GTP-bound translation factors. The sequence is that of Large ribosomal subunit protein uL10 from Corynebacterium urealyticum (strain ATCC 43042 / DSM 7109).